The chain runs to 741 residues: Protein lin-54 homolog (741 aa).

A CRC domain is found at 513–626 (PRKPCNCTKS…KCIGCKNFEE (114 aa)). The interval 515–528 (KPCNCTKSLCLKLY) is DNA-binding. Positions 517, 519, 524, 529, 531, 538, 541, 543, and 546 each coordinate Zn(2+). The linker stretch occupies residues 575 to 588 (IGKGKEGESDRRHS). The Zn(2+) site is built by Cys-591, Cys-593, Cys-598, Cys-603, Cys-605, Cys-612, Cys-616, Cys-618, and Cys-621. The interval 591 to 604 (CNCKRSGCLKNYCE) is DNA-binding.

This sequence belongs to the lin-54 family. Component of the DREAM complex.

It localises to the nucleus. Functionally, component of the DREAM complex, a multiprotein complex that can both act as a transcription activator or repressor depending on the context. Specifically recognizes the consensus motif 5'-TTYRAA-3' in target DNA. In Xenopus tropicalis (Western clawed frog), this protein is Protein lin-54 homolog (lin54).